The chain runs to 491 residues: Katanin p60 ATPase-containing subunit A1 (491 aa).

Positions 1-29 (MSLLMITENVKLAREYALLGNYDSAMVYY) are interaction with KATNB1. Positions 1-75 (MSLLMITENV…VKEIMKTLES (75 aa)) are interaction with dynein and NDEL1. The interval 1 to 185 (MSLLMITENV…EPEANKFDST (185 aa)) is interaction with microtubules. Ser42 carries the post-translational modification Phosphoserine; by DYRK2. The tract at residues 87–183 (QHELPSSEGE…VTEPEANKFD (97 aa)) is disordered. Over residues 145–169 (HSDRGKAVRSREKKEQSKGREEKNK) the composition is skewed to basic and acidic residues. 249–256 (GPPGTGKT) contributes to the ATP binding site.

It belongs to the AAA ATPase family. Katanin p60 subunit A1 subfamily. Can homooligomerize into hexameric rings, which may be promoted by interaction with microtubules. Interacts with KATNB1, which may serve as a targeting subunit. Interacts with ASPM; the katanin complex formation KATNA1:KATNB1 is required for the association of ASPM. Interacts with dynein and NDEL1. Associates with the E3 ligase complex containing DYRK2, EDD/UBR5, DDB1 and DCAF1 proteins (EDVP complex). Interacts with KLHL42 (via the kelch domains). Interacts with CUL3; the interaction is enhanced by KLHL42. Interacts with KATNB1 and KATNBL1. Post-translationally, phosphorylation by DYRK2 triggers ubiquitination and subsequent degradation. In terms of processing, ubiquitinated by the BCR(KLHL42) E3 ubiquitin ligase complex, leading to its proteasomal degradation. Ubiquitinated by the EDVP E3 ligase complex and subsequently targeted for proteasomal degradation.

It is found in the cytoplasm. It localises to the midbody. The protein resides in the cytoskeleton. The protein localises to the microtubule organizing center. Its subcellular location is the centrosome. It is found in the spindle pole. It localises to the spindle. It carries out the reaction n ATP + n H2O + a microtubule = n ADP + n phosphate + (n+1) alpha/beta tubulin heterodimers.. ATPase activity is stimulated by microtubules, which promote homooligomerization. ATP-dependent microtubule severing is stimulated by interaction with KATNB1. In terms of biological role, catalytic subunit of a complex which severs microtubules in an ATP-dependent manner. Microtubule severing may promote rapid reorganization of cellular microtubule arrays and the release of microtubules from the centrosome following nucleation. Microtubule release from the mitotic spindle poles may allow depolymerization of the microtubule end proximal to the spindle pole, leading to poleward microtubule flux and poleward motion of chromosome. Microtubule release within the cell body of neurons may be required for their transport into neuronal processes by microtubule-dependent motor proteins. This transport is required for axonal growth. The sequence is that of Katanin p60 ATPase-containing subunit A1 (Katna1) from Rattus norvegicus (Rat).